The following is a 94-amino-acid chain: Pyrimidine/purine nucleoside phosphorylase (94 aa).

It belongs to the nucleoside phosphorylase PpnP family.

The catalysed reaction is a purine D-ribonucleoside + phosphate = a purine nucleobase + alpha-D-ribose 1-phosphate. It carries out the reaction adenosine + phosphate = alpha-D-ribose 1-phosphate + adenine. The enzyme catalyses cytidine + phosphate = cytosine + alpha-D-ribose 1-phosphate. It catalyses the reaction guanosine + phosphate = alpha-D-ribose 1-phosphate + guanine. The catalysed reaction is inosine + phosphate = alpha-D-ribose 1-phosphate + hypoxanthine. It carries out the reaction thymidine + phosphate = 2-deoxy-alpha-D-ribose 1-phosphate + thymine. The enzyme catalyses uridine + phosphate = alpha-D-ribose 1-phosphate + uracil. It catalyses the reaction xanthosine + phosphate = alpha-D-ribose 1-phosphate + xanthine. Catalyzes the phosphorolysis of diverse nucleosides, yielding D-ribose 1-phosphate and the respective free bases. Can use uridine, adenosine, guanosine, cytidine, thymidine, inosine and xanthosine as substrates. Also catalyzes the reverse reactions. In Klebsiella pneumoniae (strain 342), this protein is Pyrimidine/purine nucleoside phosphorylase.